We begin with the raw amino-acid sequence, 938 residues long: Kinesin-like protein KIN-7B (938 aa).

One can recognise a Kinesin motor domain in the interval 29–348; that stretch reads KILVTVRMRP…LSFAMSAKEV (320 aa). 113-120 is a binding site for ATP; that stretch reads GQTSSGKT. Residues 357–431 adopt a coiled-coil conformation; sequence VVSEKKLLKH…DLERKAKERK (75 aa). Residues 450–481 form a disordered region; the sequence is TKEESIPSKSVPSSRRTARDRRKDNVRQSLTS. Residues 555–590 are a coiled coil; it reads KANLKEEINRLNSQEIAALEKKLECVQNTIDMLVSS. Positions 628–678 are disordered; that stretch reads CSPLSGTENKDPESNVVSANSAPVSFGATPPKRDDNRCRTQSREGTPVSRQ. The span at 641–652 shows a compositional bias: low complexity; the sequence is SNVVSANSAPVS. The span at 658 to 669 shows a compositional bias: basic and acidic residues; sequence PKRDDNRCRTQS.

Belongs to the TRAFAC class myosin-kinesin ATPase superfamily. Kinesin family. KIN-7 subfamily. Interacts with ANP3. Interacts with TIO/FU. Expressed in roots, stems, flowers, pollen mother cells and embryos.

It localises to the cytoplasm. The protein localises to the cytoskeleton. The protein resides in the phragmoplast. Probable plus end-directed motor protein that functions in the NACK-PQR (ANP3-MKK6-MPK4) MAP kinase signaling pathway, which is essential for somatic cell cytokinesis, especially for the cell-plate formation and its expansion. May regulate the activity and the localization of ANP3, probably by association through the non-catalytic region of the kinase. Functionally redundant with NACK1 and essential to promote the progression of cytokinesis and for cellularization (formation of the cell plate) during microgametogenesis and megagametogenesis. The polypeptide is Kinesin-like protein KIN-7B (Arabidopsis thaliana (Mouse-ear cress)).